The chain runs to 158 residues: Endoribonuclease YbeY (158 aa).

Residues His-124, His-128, and His-134 each contribute to the Zn(2+) site.

This sequence belongs to the endoribonuclease YbeY family. Requires Zn(2+) as cofactor.

It localises to the cytoplasm. In terms of biological role, single strand-specific metallo-endoribonuclease involved in late-stage 70S ribosome quality control and in maturation of the 3' terminus of the 16S rRNA. This chain is Endoribonuclease YbeY, found in Caldicellulosiruptor bescii (strain ATCC BAA-1888 / DSM 6725 / KCTC 15123 / Z-1320) (Anaerocellum thermophilum).